We begin with the raw amino-acid sequence, 439 residues long: tRNA modification GTPase MnmE (439 aa).

(6S)-5-formyl-5,6,7,8-tetrahydrofolate is bound by residues Arg-24, Glu-81, and Lys-121. One can recognise a TrmE-type G domain in the interval 218-363 (GFKVVIAGAP…LRDLIGRVVK (146 aa)). Asn-228 lines the K(+) pocket. GTP-binding positions include 228-233 (NAGKSS), 247-253 (TDIAGTT), and 272-275 (DTAG). Ser-232 is a Mg(2+) binding site. The K(+) site is built by Thr-247, Ile-249, and Thr-252. Residue Thr-253 participates in Mg(2+) binding. Lys-439 serves as a coordination point for (6S)-5-formyl-5,6,7,8-tetrahydrofolate.

This sequence belongs to the TRAFAC class TrmE-Era-EngA-EngB-Septin-like GTPase superfamily. TrmE GTPase family. As to quaternary structure, homodimer. Heterotetramer of two MnmE and two MnmG subunits. It depends on K(+) as a cofactor.

It is found in the cytoplasm. Exhibits a very high intrinsic GTPase hydrolysis rate. Involved in the addition of a carboxymethylaminomethyl (cmnm) group at the wobble position (U34) of certain tRNAs, forming tRNA-cmnm(5)s(2)U34. This chain is tRNA modification GTPase MnmE, found in Rhizobium etli (strain CIAT 652).